The chain runs to 506 residues: Histidine ammonia-lyase (506 aa).

The segment at residues 143–145 (ASG) is a cross-link (5-imidazolinone (Ala-Gly)). S144 carries the 2,3-didehydroalanine (Ser) modification.

It belongs to the PAL/histidase family. Contains an active site 4-methylidene-imidazol-5-one (MIO), which is formed autocatalytically by cyclization and dehydration of residues Ala-Ser-Gly.

The protein resides in the cytoplasm. It catalyses the reaction L-histidine = trans-urocanate + NH4(+). It participates in amino-acid degradation; L-histidine degradation into L-glutamate; N-formimidoyl-L-glutamate from L-histidine: step 1/3. This chain is Histidine ammonia-lyase, found in Salmonella schwarzengrund (strain CVM19633).